Here is a 212-residue protein sequence, read N- to C-terminus: Thymidylate kinase (212 aa).

An ATP-binding site is contributed by 10–17 (GPEGAGKT).

This sequence belongs to the thymidylate kinase family.

The enzyme catalyses dTMP + ATP = dTDP + ADP. In terms of biological role, phosphorylation of dTMP to form dTDP in both de novo and salvage pathways of dTTP synthesis. This is Thymidylate kinase from Bacillus pumilus (strain SAFR-032).